We begin with the raw amino-acid sequence, 798 residues long: Glycogen phosphorylase (798 aa).

Lysine 646 is modified (N6-(pyridoxal phosphate)lysine).

It belongs to the glycogen phosphorylase family. Requires pyridoxal 5'-phosphate as cofactor.

It catalyses the reaction [(1-&gt;4)-alpha-D-glucosyl](n) + phosphate = [(1-&gt;4)-alpha-D-glucosyl](n-1) + alpha-D-glucose 1-phosphate. Its function is as follows. Phosphorylase is an important allosteric enzyme in carbohydrate metabolism. Enzymes from different sources differ in their regulatory mechanisms and in their natural substrates. However, all known phosphorylases share catalytic and structural properties. In Bacillus subtilis (strain 168), this protein is Glycogen phosphorylase (glgP).